Reading from the N-terminus, the 85-residue chain is Large ribosomal subunit protein bL27 (85 aa).

This sequence belongs to the bacterial ribosomal protein bL27 family.

In Xylella fastidiosa (strain Temecula1 / ATCC 700964), this protein is Large ribosomal subunit protein bL27.